The following is a 436-amino-acid chain: Glutamyl-tRNA reductase (436 aa).

Substrate-binding positions include 49–52 (TCNR), serine 109, 114–116 (EGQ), and glutamine 120. The active-site Nucleophile is the cysteine 50. 198–203 (GAGRMS) contributes to the NADP(+) binding site.

This sequence belongs to the glutamyl-tRNA reductase family. As to quaternary structure, homodimer.

It catalyses the reaction (S)-4-amino-5-oxopentanoate + tRNA(Glu) + NADP(+) = L-glutamyl-tRNA(Glu) + NADPH + H(+). It participates in porphyrin-containing compound metabolism; protoporphyrin-IX biosynthesis; 5-aminolevulinate from L-glutamyl-tRNA(Glu): step 1/2. It functions in the pathway porphyrin-containing compound metabolism; chlorophyll biosynthesis. Its function is as follows. Catalyzes the NADPH-dependent reduction of glutamyl-tRNA(Glu) to glutamate 1-semialdehyde (GSA). This is Glutamyl-tRNA reductase from Prochlorococcus marinus (strain MIT 9312).